The chain runs to 581 residues: Arginine--tRNA ligase (581 aa).

A 'HIGH' region motif is present at residues 126–136 (PNLAKEMHVGH).

Belongs to the class-I aminoacyl-tRNA synthetase family. Monomer.

Its subcellular location is the cytoplasm. The enzyme catalyses tRNA(Arg) + L-arginine + ATP = L-arginyl-tRNA(Arg) + AMP + diphosphate. The chain is Arginine--tRNA ligase from Shewanella amazonensis (strain ATCC BAA-1098 / SB2B).